The chain runs to 98 residues: DNA-binding protein Fis (98 aa).

Positions 74 to 93 form a DNA-binding region, H-T-H motif; it reads QTRAAQMMGINRGTLRKKLK.

This sequence belongs to the transcriptional regulatory Fis family. In terms of assembly, homodimer.

In terms of biological role, activates ribosomal RNA transcription. Plays a direct role in upstream activation of rRNA promoters. The polypeptide is DNA-binding protein Fis (Sodalis glossinidius (strain morsitans)).